The primary structure comprises 483 residues: ATP-dependent RNA helicase DDX25 (483 aa).

The Q motif signature appears at 97-125; it reads KSFEELHLKNELLRGIYAMGFNRPSKIQE. The region spanning 130–300 is the Helicase ATP-binding domain; the sequence is MMLADPPQNL…ERIVPDPNII (171 aa). Position 143–150 (143–150) interacts with ATP; sequence SQSGTGKT. Positions 247 to 250 match the DEAD box motif; it reads DEAD. The Helicase C-terminal domain maps to 311–478; sequence NIQQFYDQCE…KLNSMDMDEM (168 aa).

Belongs to the DEAD box helicase family. An mRNA component of germ plasm. Localizes to the granulo-fibrillar material (GFM) of the mitochondrial cloud in stage I oocytes. Associated, at a low level, with the periphery of mature germinal granules in later stage oocytes. Localizes to the vegetal cortex in stage II oocytes and segregates with germ plasm during early embryogenesis. In adults, expression is restricted to the ovary and, at a lower level, to spermatogonia, spermatocytes and spermatids of the testis.

It localises to the cytoplasm. It is found in the nucleus. It carries out the reaction ATP + H2O = ADP + phosphate + H(+). In terms of biological role, ATP-dependent RNA helicase. This chain is ATP-dependent RNA helicase DDX25, found in Xenopus laevis (African clawed frog).